Reading from the N-terminus, the 60-residue chain is Venom protein 4.1 (60 aa).

Residues 1–26 (MKALCAILLVLFACSVMFEHFSISTA) form the signal peptide.

Belongs to the non-disulfide-bridged peptide (NDBP) superfamily. In terms of tissue distribution, expressed by the venom gland.

The protein resides in the secreted. In Lychas mucronatus (Chinese swimming scorpion), this protein is Venom protein 4.1.